A 20-amino-acid chain; its full sequence is Cathepsin L1 (20 aa).

Basic and acidic residues predominate over residues 1-10; it reads AVPDKIDPRE. Residues 1 to 20 form a disordered region; the sequence is AVPDKIDPRESGYVTGVKDQ.

It belongs to the peptidase C1 family. In terms of assembly, dimer of a heavy and a light chain linked by disulfide bonds.

The protein resides in the lysosome. The catalysed reaction is Specificity close to that of papain. As compared to cathepsin B, cathepsin L exhibits higher activity toward protein substrates, but has little activity on Z-Arg-Arg-NHMec, and no peptidyl-dipeptidase activity.. Thiol protease that assists the parasite in burrowing through the gut wall and liver of its mammalian host. This chain is Cathepsin L1, found in Fasciola hepatica (Liver fluke).